A 912-amino-acid chain; its full sequence is Tiger protein E1 (912 aa).

Positions 1 to 22 (MKLKHLTIFLFIFIYRFLFVKS) are cleaved as a signal peptide. Topologically, residues 23-815 (DCYLINNERP…YSENKSSGFP (793 aa)) are extracellular. 20 N-linked (GlcNAc...) asparagine glycosylation sites follow: Asn-54, Asn-108, Asn-164, Asn-183, Asn-232, Asn-268, Asn-323, Asn-356, Asn-398, Asn-407, Asn-568, Asn-637, Asn-653, Asn-658, Asn-706, Asn-716, Asn-763, Asn-774, Asn-781, and Asn-809. IPT/TIG domains are found at residues 532-609 (SSDQ…GPFT) and 612-686 (PVIE…PLII). Positions 715 to 796 (TNTSDIDQTA…DGQYFIAQIF (82 aa)) constitute an IPT/TIG 3 domain. A helical transmembrane segment spans residues 816-836 (NEMYIGIVAIIIFLALIFFAI). The Cytoplasmic segment spans residues 837-912 (KTQVEKYIEE…IRCCFKEHTD (76 aa)).

It localises to the cell membrane. This chain is Tiger protein E1 (tgrE1), found in Dictyostelium discoideum (Social amoeba).